Here is a 469-residue protein sequence, read N- to C-terminus: MFRGRVRHVHFVGIGGVGMSGLAEILRSLEFEVSGSDLKESSTTRRLTSLGVRIDIGHRAENVRGVDVVVYSSAIRPENPELTEARALGTPVIGRAEMLAELMRVKYGVAIAGSHGKTTTTSLVATVLRAAGLDPTVVVGGKMAALGTNARLGAGDLLVAEADESDGSFLRLTPTIAVVTNIDPEHLDHYGTHERIKDAFVEFAARVPFYGLAVLCLDHPHVQDLLPRIPRRHVTYGVSPQSDYSARGIQFRGLETSFNAYRRGEPLGGFTVKMPGAHNVLNCLATIAVADELEVPLDVTKQALATFGGVARRFTVVGSIGGVTMIDDYGHHPAEIRATIDAARRAFPGEDHRVVVAFQPHRHTRTRDLFDEFTRAFNQADVLLVTDIYAAGEPPIPGVTAERLVQSIREHGHHDARFIADKTDLPEALEKIARPGDVVIALGAGDVNACVRGLKARLEAKSPPQEGSS.

113-119 (GSHGKTT) provides a ligand contact to ATP.

The protein belongs to the MurCDEF family.

The protein resides in the cytoplasm. The catalysed reaction is UDP-N-acetyl-alpha-D-muramate + L-alanine + ATP = UDP-N-acetyl-alpha-D-muramoyl-L-alanine + ADP + phosphate + H(+). The protein operates within cell wall biogenesis; peptidoglycan biosynthesis. Its function is as follows. Cell wall formation. This Sorangium cellulosum (strain So ce56) (Polyangium cellulosum (strain So ce56)) protein is UDP-N-acetylmuramate--L-alanine ligase.